The chain runs to 239 residues: Uridylate kinase (239 aa).

12–15 (KLSG) contacts ATP. Positions 20–25 (GDQGAG) are involved in allosteric activation by GTP. Glycine 54 lines the UMP pocket. ATP is bound by residues glycine 55 and arginine 59. UMP contacts are provided by residues aspartate 74 and 135 to 142 (TGNPFFTT). ATP is bound by residues threonine 162, tyrosine 168, and aspartate 171.

The protein belongs to the UMP kinase family. Homohexamer.

It localises to the cytoplasm. It catalyses the reaction UMP + ATP = UDP + ADP. The protein operates within pyrimidine metabolism; CTP biosynthesis via de novo pathway; UDP from UMP (UMPK route): step 1/1. Its activity is regulated as follows. Allosterically activated by GTP. Inhibited by UTP. In terms of biological role, catalyzes the reversible phosphorylation of UMP to UDP. The polypeptide is Uridylate kinase (Methylococcus capsulatus (strain ATCC 33009 / NCIMB 11132 / Bath)).